A 314-amino-acid chain; its full sequence is DNA-directed RNA polymerase subunit alpha (314 aa).

The tract at residues 1–228 is alpha N-terminal domain (alpha-NTD); that stretch reads MIEIEKPRIE…EHLNIFVDLT (228 aa). The segment at 245-314 is alpha C-terminal domain (alpha-CTD); that stretch reads KEKVLEMSIE…DLGLGLRKED (70 aa).

It belongs to the RNA polymerase alpha chain family. In terms of assembly, homodimer. The RNAP catalytic core consists of 2 alpha, 1 beta, 1 beta' and 1 omega subunit. When a sigma factor is associated with the core the holoenzyme is formed, which can initiate transcription.

It catalyses the reaction RNA(n) + a ribonucleoside 5'-triphosphate = RNA(n+1) + diphosphate. DNA-dependent RNA polymerase catalyzes the transcription of DNA into RNA using the four ribonucleoside triphosphates as substrates. This is DNA-directed RNA polymerase subunit alpha from Macrococcus caseolyticus (strain JCSC5402) (Macrococcoides caseolyticum).